Reading from the N-terminus, the 338-residue chain is tRNA N6-adenosine threonylcarbamoyltransferase (338 aa).

Positions 111 and 115 each coordinate Fe cation. Substrate-binding positions include 134–138 (LVSGG), aspartate 167, glycine 180, and asparagine 272. Residue aspartate 300 participates in Fe cation binding.

The protein belongs to the KAE1 / TsaD family. The cofactor is Fe(2+).

It is found in the cytoplasm. The enzyme catalyses L-threonylcarbamoyladenylate + adenosine(37) in tRNA = N(6)-L-threonylcarbamoyladenosine(37) in tRNA + AMP + H(+). Required for the formation of a threonylcarbamoyl group on adenosine at position 37 (t(6)A37) in tRNAs that read codons beginning with adenine. Is involved in the transfer of the threonylcarbamoyl moiety of threonylcarbamoyl-AMP (TC-AMP) to the N6 group of A37, together with TsaE and TsaB. TsaD likely plays a direct catalytic role in this reaction. The protein is tRNA N6-adenosine threonylcarbamoyltransferase of Shewanella putrefaciens (strain CN-32 / ATCC BAA-453).